Consider the following 260-residue polypeptide: Exosome complex component Rrp4 (260 aa).

Positions 59–128 constitute an S1 motif domain; it reads NDVVIGIVIV…SSMKVELALR (70 aa). Residues 136-194 form the KH domain; it reads KTGQIIKVESVKVPRVIGHGGSMISMLKKETNCSIFVGQNGRIWIDGKDEDIELLSKAL.

It belongs to the RRP4 family. Component of the archaeal exosome complex. Forms a trimer of Rrp4 and/or Csl4 subunits. The trimer associates with a hexameric ring-like arrangement composed of 3 Rrp41-Rrp42 heterodimers.

It is found in the cytoplasm. Its function is as follows. Non-catalytic component of the exosome, which is a complex involved in RNA degradation. Increases the RNA binding and the efficiency of RNA degradation. Confers strong poly(A) specificity to the exosome. The sequence is that of Exosome complex component Rrp4 from Methanosarcina acetivorans (strain ATCC 35395 / DSM 2834 / JCM 12185 / C2A).